Reading from the N-terminus, the 135-residue chain is DNA-directed RNA polymerase subunit omega (135 aa).

Positions 107 to 135 (ASQESQDYEVDGEIDDEINDQDGDEEVSV) are disordered. Positions 112-135 (QDYEVDGEIDDEINDQDGDEEVSV) are enriched in acidic residues.

The protein belongs to the RNA polymerase subunit omega family. The RNAP catalytic core consists of 2 alpha, 1 beta, 1 beta' and 1 omega subunit. When a sigma factor is associated with the core the holoenzyme is formed, which can initiate transcription.

The enzyme catalyses RNA(n) + a ribonucleoside 5'-triphosphate = RNA(n+1) + diphosphate. Its function is as follows. Promotes RNA polymerase assembly. Latches the N- and C-terminal regions of the beta' subunit thereby facilitating its interaction with the beta and alpha subunits. The protein is DNA-directed RNA polymerase subunit omega of Wolbachia pipientis wMel.